A 598-amino-acid polypeptide reads, in one-letter code: MSLDHIRNFSIIAHIDHGKSTLADRLIQFTGALSERDMKEQVLDSMDIERERGITIKAQSVRLNYKAKDGKTYVLNLIDTPGHVDFTYEVSRSLAACEGALLIVDAAQGVEAQTMANVYLALEHDLEIIPVLNKIDLPSAEPERVREQIEEVIGLDASEAILASAKSGIGIEEILEAIVKRVPPPKGDLDAPAKALVVDSWYDNYLGVVSLARVYDGVLKAGEKIRFMGVGMDYPLDNVGFLTPVLTKVAELKAGEVGCIMAGIKKLSDARVGDTITTVRRPCASQLPGFQPAKSMVFAGLYPVDSADYEDLKDALEKLAINDASLNYEVETSPALGFGFRCGFLGMLHMEIIQERLEREFDLDLVTTAPTVVYRVKQTDGQIMDIRSPGDLPPTTKREYIEEPYILANIMVPAEYMGPVMQLCTDRRGTQKDMSYISDTRVMVQYEMPMSEVVMDFFDRLKSMTKGYASLDYHLLDYRMSDLVKLDILINGDPVDALSVIVHRNISQYRGRELAKKMKELIHRQMFDVAVQACIGGKIIARETVKALRKNVTAKCYGGDITRKRKLLEKQKAGKKRMKQVGKVEIPQEAFLAVLKVD.

A tr-type G domain is found at 4–186 (DHIRNFSIIA…AIVKRVPPPK (183 aa)). GTP is bound by residues 16–21 (DHGKST) and 133–136 (NKID).

It belongs to the TRAFAC class translation factor GTPase superfamily. Classic translation factor GTPase family. LepA subfamily.

It localises to the cell inner membrane. The catalysed reaction is GTP + H2O = GDP + phosphate + H(+). Its function is as follows. Required for accurate and efficient protein synthesis under certain stress conditions. May act as a fidelity factor of the translation reaction, by catalyzing a one-codon backward translocation of tRNAs on improperly translocated ribosomes. Back-translocation proceeds from a post-translocation (POST) complex to a pre-translocation (PRE) complex, thus giving elongation factor G a second chance to translocate the tRNAs correctly. Binds to ribosomes in a GTP-dependent manner. The protein is Elongation factor 4 of Magnetococcus marinus (strain ATCC BAA-1437 / JCM 17883 / MC-1).